Reading from the N-terminus, the 216-residue chain is Adenylate kinase (216 aa).

10 to 15 contacts ATP; it reads GSGKGT. Residues 30–59 form an NMP region; the sequence is STGDMLRAAVKEGTPMGVKAKAKMDAGALV. Residues T31, R36, 57-59, 85-88, and Q92 contribute to the AMP site; these read ALV and GFPR. Positions 126 to 163 are LID; it reads GRRTCRDCGKMYHVEFDAPAVADKCDKCGGQLFQRDDD. Residue R127 participates in ATP binding. The Zn(2+) site is built by C130, C133, C150, and C153. AMP contacts are provided by R160 and R171. K199 serves as a coordination point for ATP.

It belongs to the adenylate kinase family. In terms of assembly, monomer.

It localises to the cytoplasm. The catalysed reaction is AMP + ATP = 2 ADP. Its pathway is purine metabolism; AMP biosynthesis via salvage pathway; AMP from ADP: step 1/1. Functionally, catalyzes the reversible transfer of the terminal phosphate group between ATP and AMP. Plays an important role in cellular energy homeostasis and in adenine nucleotide metabolism. The chain is Adenylate kinase from Syntrophotalea carbinolica (strain DSM 2380 / NBRC 103641 / GraBd1) (Pelobacter carbinolicus).